A 762-amino-acid polypeptide reads, in one-letter code: Cellulose synthase-like protein H2 (762 aa).

Over residues 1 to 15 (MAVVAAAAATGSTTR) the composition is skewed to low complexity. The segment at 1–39 (MAVVAAAAATGSTTRSGGGGGEGTRSGRKKPPPPPLQER) is disordered. The next 2 helical transmembrane spans lie at 47 to 67 (AWAWRLAGLAVLLLLLALLAL) and 81 to 101 (GVWRVALVCEAWFAALCALNV). Residues D180 and D470 contribute to the active site. Helical transmembrane passes span 541-561 (LAYLIVLGWPLRAPFELCYGL), 582-602 (FSVPLALFISYNTYNFMEYMA), 619-639 (IISVSAWTLAFLTVLLKSLGL), 673-693 (LPVFIPVTALAMLNIVAVTVG), 708-728 (APGIGEFMCCGWLVLCFFPFV), and 739-759 (GIPWSVKLKASLLVAMFVTFC).

This sequence belongs to the glycosyltransferase 2 family. Plant cellulose synthase-like H subfamily.

Its subcellular location is the golgi apparatus membrane. Functionally, thought to be a Golgi-localized beta-glycan synthase that polymerize the backbones of noncellulosic polysaccharides (hemicelluloses) of plant cell wall. The chain is Cellulose synthase-like protein H2 (CSLH2) from Oryza sativa subsp. indica (Rice).